Reading from the N-terminus, the 160-residue chain is Large ribosomal subunit protein eL29 (160 aa).

The segment covering 1 to 26 (MAKSKNHTTHNQSRKWHRNGIKKPRS) has biased composition (basic residues). The disordered stretch occupies residues 1 to 32 (MAKSKNHTTHNQSRKWHRNGIKKPRSQRYESL). Lysine 5 bears the N6-methyllysine mark. Phosphoserine is present on serine 31. Lysine 33 carries the N6-acetyllysine modification. The segment at 119–160 (CRPKSQAKAQSKAKATAGGTAAAPVPPASAPKGAQAPTKAPQ) is disordered. Residues 121 to 141 (PKSQAKAQSKAKATAGGTAAA) are compositionally biased toward low complexity.

The protein belongs to the eukaryotic ribosomal protein eL29 family. Component of the large ribosomal subunit.

The protein localises to the cytoplasm. In terms of biological role, component of the large ribosomal subunit. The ribosome is a large ribonucleoprotein complex responsible for the synthesis of proteins in the cell. This is Large ribosomal subunit protein eL29 (RPL29) from Sus scrofa (Pig).